The following is a 147-amino-acid chain: Large ribosomal subunit protein bL9 (147 aa).

This sequence belongs to the bacterial ribosomal protein bL9 family.

Its function is as follows. Binds to the 23S rRNA. In Phocaeicola vulgatus (strain ATCC 8482 / DSM 1447 / JCM 5826 / CCUG 4940 / NBRC 14291 / NCTC 11154) (Bacteroides vulgatus), this protein is Large ribosomal subunit protein bL9.